Reading from the N-terminus, the 599-residue chain is Sulfite reductase [NADPH] flavoprotein alpha-component (599 aa).

The region spanning 64–202 (ITIISASQTG…AASEWRARVV (139 aa)) is the Flavodoxin-like domain. FMN is bound by residues 70–75 (SQTGNA), 117–120 (STQG), and 153–162 (LGDSSYEFFC). The FAD-binding FR-type domain maps to 234–448 (DAPLVASLSV…IEHNDNFRLP (215 aa)). Residues Thr322, Ala356, 386 to 389 (RLYS), 404 to 406 (TVG), Tyr410, and 419 to 422 (GGAS) contribute to the FAD site. NADP(+) is bound by residues 519 to 520 (SR), 525 to 529 (KVYVQ), and Asp561. Tyr599 lines the FAD pocket.

It belongs to the NADPH-dependent sulphite reductase flavoprotein subunit CysJ family. In the N-terminal section; belongs to the flavodoxin family. This sequence in the C-terminal section; belongs to the flavoprotein pyridine nucleotide cytochrome reductase family. In terms of assembly, alpha(8)-beta(8). The alpha component is a flavoprotein, the beta component is a hemoprotein. FAD is required as a cofactor. The cofactor is FMN.

The catalysed reaction is hydrogen sulfide + 3 NADP(+) + 3 H2O = sulfite + 3 NADPH + 4 H(+). It participates in sulfur metabolism; hydrogen sulfide biosynthesis; hydrogen sulfide from sulfite (NADPH route): step 1/1. Component of the sulfite reductase complex that catalyzes the 6-electron reduction of sulfite to sulfide. This is one of several activities required for the biosynthesis of L-cysteine from sulfate. The flavoprotein component catalyzes the electron flow from NADPH -&gt; FAD -&gt; FMN to the hemoprotein component. The polypeptide is Sulfite reductase [NADPH] flavoprotein alpha-component (Escherichia coli (strain K12)).